Here is a 326-residue protein sequence, read N- to C-terminus: Ribosomal large subunit pseudouridine synthase D (326 aa).

An S4 RNA-binding domain is found at 18–91; that stretch reads QRLDQALAEM…IPLDIVYEDD (74 aa). Residue Asp139 is part of the active site. A disordered region spans residues 183 to 203; that stretch reads GTVNEPISRHPTKRTHMSVHP.

Belongs to the pseudouridine synthase RluA family.

It localises to the cytoplasm. It catalyses the reaction uridine(1911/1915/1917) in 23S rRNA = pseudouridine(1911/1915/1917) in 23S rRNA. Functionally, responsible for synthesis of pseudouridine from uracil at positions 1911, 1915 and 1917 in 23S ribosomal RNA. This is Ribosomal large subunit pseudouridine synthase D (rluD) from Salmonella typhi.